Reading from the N-terminus, the 277-residue chain is RNA-binding protein pno-1 (277 aa).

Disordered stretches follow at residues 1–52 (MATS…KLVK) and 72–100 (DEDATADTADDSTGPKSSKRTKGVKGESR). Residues 8–27 (FDDELPMEEGMPELLDDEDV) show a composition bias toward acidic residues. Residues 30–40 (TLPSLLEQNLD) show a composition bias toward polar residues. Residues 72–81 (DEDATADTAD) are compositionally biased toward acidic residues. In terms of domain architecture, KH spans 198-250 (GDHVSRAIGRIAGKDGRTKLVIENTTKTRIVVANTKIHILGAYQNLKLARNAV).

The protein belongs to the PNO1 family. In terms of assembly, part of the small subunit (SSU) processome, composed of more than 70 proteins and the RNA chaperone small nucleolar RNA (snoRNA) U3.

It localises to the nucleus. Its subcellular location is the nucleolus. Functionally, part of the small subunit (SSU) processome, first precursor of the small eukaryotic ribosomal subunit. During the assembly of the SSU processome in the nucleolus, many ribosome biogenesis factors, an RNA chaperone and ribosomal proteins associate with the nascent pre-rRNA and work in concert to generate RNA folding, modifications, rearrangements and cleavage as well as targeted degradation of pre-ribosomal RNA by the RNA exosome. Positively regulates dimethylation of two adjacent adenosines in the loop of a conserved hairpin near the 3'-end of 18S rRNA. This chain is RNA-binding protein pno-1, found in Caenorhabditis elegans.